We begin with the raw amino-acid sequence, 398 residues long: Trans-2-enoyl-CoA reductase [NADH] (398 aa).

Residues 47–52 (GASSGF), 74–75 (YE), 111–112 (DA), and 139–140 (LA) each bind NAD(+). Tyr-225 contacts substrate. Tyr-235 serves as the catalytic Proton donor. Residues Lys-244 and 274 to 276 (LVT) each bind NAD(+).

Belongs to the TER reductase family. In terms of assembly, monomer.

It catalyses the reaction a 2,3-saturated acyl-CoA + NAD(+) = a (2E)-enoyl-CoA + NADH + H(+). It participates in lipid metabolism; fatty acid biosynthesis. In terms of biological role, involved in the fatty acid synthesis (FAS II). Catalyzes the reduction of the carbon-carbon double bond of crotonyl-CoA to yield butyryl-CoA. This chain is Trans-2-enoyl-CoA reductase [NADH], found in Clostridium acetobutylicum (strain ATCC 824 / DSM 792 / JCM 1419 / IAM 19013 / LMG 5710 / NBRC 13948 / NRRL B-527 / VKM B-1787 / 2291 / W).